Consider the following 427-residue polypeptide: MEMLKAEVKPAVGCTEPVALALACAKAKELLGEEIVENRMLVSPSIYKNGMCVGIPGTERLGLKIAAALGIVGGHSENGLSVLETLTKEEVKIAEDYMDNTPLSITPADTREKVFIEVVLKGKNHIAKVRIRTKHDNFTFLEKDGEVLLDNEPKVSASNDAAEKAESLMDTVTIQELIKNVEEIDFKDIEFLLDGVKMNEEMAEYGLKQKTGIGVGYGIKKSIEEGLLGNDVINYAMMLTAGASDARMAGVKMPVMSSNGSGNHGLTAILPIVAYNKKFPQSDERLAKALAISHLVTGYIKNYTGRLSAVCGCGVAASTGATAGISWLMNGTEKQIEGAIENMIADLSGMICDGAKAGCALKLSSAASAAIQSAIIAKQDCFVPPLNGIVGSSVEQSIQNLGRVSDKGMSITDEIILNVMNDMNKVD.

The protein belongs to the UPF0597 family.

This chain is UPF0597 protein CD630_32320, found in Clostridioides difficile (strain 630) (Peptoclostridium difficile).